A 149-amino-acid polypeptide reads, in one-letter code: Calmodulin-2 (149 aa).

Residue Ala2 is modified to N-acetylalanine. EF-hand domains lie at 8-43 (EQIA…LGQN), 44-79 (PTEA…KMKD), 81-116 (DSEE…LGEK), and 117-149 (LTDE…MTSK). Asp21, Asp23, Asp25, Thr27, Glu32, Asp57, Asp59, Asn61, Thr63, Glu68, Asp94, Asp96, Asn98, and Glu105 together coordinate Ca(2+). Lys116 bears the N6,N6,N6-trimethyllysine mark. 5 residues coordinate Ca(2+): Asp130, Asp132, Asp134, Gln136, and Glu141.

The protein belongs to the calmodulin family.

In terms of biological role, calmodulin mediates the control of a large number of enzymes, ion channels and other proteins by Ca(2+). Among the enzymes to be stimulated by the calmodulin-Ca(2+) complex are a number of protein kinases and phosphatases. The chain is Calmodulin-2 (CAM2) from Branchiostoma lanceolatum (Common lancelet).